A 71-amino-acid chain; its full sequence is UPF0337 protein PPA1427 (71 aa).

The disordered stretch occupies residues 20–46 (EKIGGLTDDSDLKSAGADQKASGKVAQ).

Belongs to the UPF0337 (CsbD) family.

The sequence is that of UPF0337 protein PPA1427 from Cutibacterium acnes (strain DSM 16379 / KPA171202) (Propionibacterium acnes).